A 265-amino-acid chain; its full sequence is Protein IL-40 (265 aa).

The signal sequence occupies residues 1-20 (MGLPGLFCLAVLAASSFSKA). Residues Asn86 and Asn132 are each glycosylated (N-linked (GlcNAc...) asparagine).

As to expression, expressed in fetal liver and bone marrow. Expressed in peripheral blood lymphocyte B cells.

It is found in the secreted. Its function is as follows. Probable B cell-associated cytokine that plays a role in the regulation of humoral immune responses. Involved in lymphocyte B cell development and immunoglobulin/IgA production. This chain is Protein IL-40, found in Homo sapiens (Human).